Here is a 623-residue protein sequence, read N- to C-terminus: Chaperone protein DnaK (623 aa).

Residue threonine 197 is modified to Phosphothreonine; by autocatalysis. Residues 600-623 form a disordered region; sequence KKDENAGANGGNKKDDDVIDAEVE.

This sequence belongs to the heat shock protein 70 family.

In terms of biological role, acts as a chaperone. The polypeptide is Chaperone protein DnaK (Campylobacter concisus (strain 13826)).